A 185-amino-acid polypeptide reads, in one-letter code: Probable RNA polymerase sigma-C factor (185 aa).

A Polymerase core binding motif is present at residues D52–I65. The H-T-H motif DNA-binding region spans Y149–A168.

The protein belongs to the sigma-70 factor family. ECF subfamily.

Sigma factors are initiation factors that promote the attachment of RNA polymerase to specific initiation sites and are then released. This is Probable RNA polymerase sigma-C factor (sigC) from Mycobacterium bovis (strain ATCC BAA-935 / AF2122/97).